The primary structure comprises 435 residues: Zinc finger CCCH domain-containing protein 17 (435 aa).

Disordered stretches follow at residues 1-30 (MDIE…SSTS) and 58-107 (TAKR…GPRH). The C3H1-type 1 zinc-finger motif lies at 28 to 54 (STSGKVCIHWRAGRCNRFPCPYLHSEL). Over residues 77–103 (SGGGGGRGAGGAGGPNKWGRGPGGADG) the composition is skewed to gly residues. The C3H1-type 2 zinc-finger motif lies at 108–135 (KVPDRPCRYFLAGDCSYGEKCRYPHSYS). WD repeat units lie at residues 148–189 (GHEK…GVIN), 191–225 (GREI…EMNL), 227–264 (GPTG…NGFE), 271–308 (GHQL…CIQT), 311–348 (DHTG…SLEV), 355–395 (EHGA…DRGR), and 397–435 (FSKQ…SQTK).

The polypeptide is Zinc finger CCCH domain-containing protein 17 (Oryza sativa subsp. japonica (Rice)).